The following is a 483-amino-acid chain: Glutamyl-tRNA(Gln) amidotransferase subunit A (483 aa).

Catalysis depends on charge relay system residues Lys-76 and Ser-151. Ser-175 acts as the Acyl-ester intermediate in catalysis.

It belongs to the amidase family. GatA subfamily. As to quaternary structure, heterotrimer of A, B and C subunits.

The enzyme catalyses L-glutamyl-tRNA(Gln) + L-glutamine + ATP + H2O = L-glutaminyl-tRNA(Gln) + L-glutamate + ADP + phosphate + H(+). In terms of biological role, allows the formation of correctly charged Gln-tRNA(Gln) through the transamidation of misacylated Glu-tRNA(Gln) in organisms which lack glutaminyl-tRNA synthetase. The reaction takes place in the presence of glutamine and ATP through an activated gamma-phospho-Glu-tRNA(Gln). The protein is Glutamyl-tRNA(Gln) amidotransferase subunit A of Pseudomonas fluorescens (strain SBW25).